We begin with the raw amino-acid sequence, 317 residues long: Transaldolase (317 aa).

The active-site Schiff-base intermediate with substrate is the K132.

It belongs to the transaldolase family. Type 1 subfamily. Homodimer.

It localises to the cytoplasm. It catalyses the reaction D-sedoheptulose 7-phosphate + D-glyceraldehyde 3-phosphate = D-erythrose 4-phosphate + beta-D-fructose 6-phosphate. It functions in the pathway carbohydrate degradation; pentose phosphate pathway; D-glyceraldehyde 3-phosphate and beta-D-fructose 6-phosphate from D-ribose 5-phosphate and D-xylulose 5-phosphate (non-oxidative stage): step 2/3. Its function is as follows. Transaldolase is important for the balance of metabolites in the pentose-phosphate pathway. The chain is Transaldolase from Pseudoalteromonas atlantica (strain T6c / ATCC BAA-1087).